A 216-amino-acid polypeptide reads, in one-letter code: Cytochrome c oxidase assembly protein CtaG (216 aa).

Residues 1–23 (MTDAPQHPQQPATGTPATPKAAP) show a composition bias toward low complexity. The tract at residues 1–24 (MTDAPQHPQQPATGTPATPKAAPR) is disordered. The Cytoplasmic segment spans residues 1-26 (MTDAPQHPQQPATGTPATPKAAPRVG). Residues 27–49 (RDVRIGATCGLLVALMVGAAYAA) form a helical; Signal-anchor for type II membrane protein membrane-spanning segment. Residues 50 to 216 (VPFYNWFCRA…SEPDRPGGSI (167 aa)) are Periplasmic-facing.

This sequence belongs to the COX11/CtaG family.

It localises to the cell inner membrane. Its function is as follows. Exerts its effect at some terminal stage of cytochrome c oxidase synthesis, probably by being involved in the insertion of the copper B into subunit I. The sequence is that of Cytochrome c oxidase assembly protein CtaG from Nitrobacter hamburgensis (strain DSM 10229 / NCIMB 13809 / X14).